The chain runs to 140 residues: Large ribosomal subunit protein uL16c (140 aa).

It belongs to the universal ribosomal protein uL16 family. Part of the 50S ribosomal subunit.

It localises to the plastid. The protein resides in the chloroplast. In Cyanidium caldarium (Red alga), this protein is Large ribosomal subunit protein uL16c.